The chain runs to 426 residues: Mothers against decapentaplegic homolog 7 (426 aa).

The segment at 14–42 (WRSRAPGGEDEEEGVGGGGGGGELRGEGA) is disordered. Lys64 and Lys70 each carry N6-acetyllysine; alternate. Glycyl lysine isopeptide (Lys-Gly) (interchain with G-Cter in ubiquitin); alternate cross-links involve residues Lys64 and Lys70. Positions 64 to 207 (KAVRGAKGHH…LSRLCELESP (144 aa)) constitute an MH1 domain. A compositionally biased stretch (basic residues) spans 67 to 76 (RGAKGHHHPH). The tract at residues 67–87 (RGAKGHHHPHPPTSGAGAAGG) is disordered. Residues Cys125, Cys180, Cys192, and His197 each contribute to the Zn(2+) site. A PY-motif motif is present at residues 208–211 (PPPY). Positions 208–217 (PPPYSRYPMD) are important for interaction with SMURF2. Ser249 is modified (phosphoserine). Positions 261-426 (WCVVAYWEEK…CWLEVIFNSR (166 aa)) constitute an MH2 domain.

It belongs to the dwarfin/SMAD family. Interacts with COPS5. Interacts with STAMBP. Interacts with PPP1R15A. Interacts with NEDD4L. Interacts with RNF111, AXIN1 and AXIN2. Interacts with ACVR1B, SMURF1, SMURF2 and TGFBR1; SMAD7 recruits SMURF1 and SMURF2 to the TGF-beta receptor and regulates its degradation. Interacts with WWP1. Interacts with PDPK1 (via PH domain). Ubiquitinated by WWP1. Interacts with TSC22D1/TSC-22; the interaction requires TGF-beta and the interaction is inhibited by TGFBR1. Post-translationally, phosphorylation on Ser-249 does not affect its stability, nuclear localization or inhibitory function in TGFB signaling; however it affects its ability to regulate transcription. Phosphorylated by PDPK1. Ubiquitinated by WWP1. Polyubiquitinated by RNF111, which is enhanced by AXIN1 and promotes proteasomal degradation. In response to TGF-beta, ubiquitinated by SMURF1; which promotes its degradation. Ubiquitinated by ARK2C, promoting proteasomal degradation, leading to enhance the BMP-Smad signaling. In terms of processing, acetylation prevents ubiquitination and degradation mediated by SMURF1. Ubiquitous in various organs, with higher levels in brain and kidney.

The protein localises to the nucleus. The protein resides in the cytoplasm. Antagonist of signaling by TGF-beta (transforming growth factor) type 1 receptor superfamily members; has been shown to inhibit TGF-beta (Transforming growth factor) and activin signaling by associating with their receptors thus preventing SMAD2 access. Functions as an adapter to recruit SMURF2 to the TGF-beta receptor complex. Also acts by recruiting the PPP1R15A-PP1 complex to TGFBR1, which promotes its dephosphorylation. Positively regulates PDPK1 kinase activity by stimulating its dissociation from the 14-3-3 protein YWHAQ which acts as a negative regulator. In Mus musculus (Mouse), this protein is Mothers against decapentaplegic homolog 7 (Smad7).